A 141-amino-acid polypeptide reads, in one-letter code: UPF0310 protein SSA_0254 (141 aa).

Belongs to the UPF0310 family.

In Streptococcus sanguinis (strain SK36), this protein is UPF0310 protein SSA_0254.